The following is a 358-amino-acid chain: Peptide chain release factor 1 (358 aa).

Q233 bears the N5-methylglutamine mark.

Belongs to the prokaryotic/mitochondrial release factor family. Post-translationally, methylated by PrmC. Methylation increases the termination efficiency of RF1.

The protein localises to the cytoplasm. Its function is as follows. Peptide chain release factor 1 directs the termination of translation in response to the peptide chain termination codons UAG and UAA. The sequence is that of Peptide chain release factor 1 from Brevibacillus brevis (strain 47 / JCM 6285 / NBRC 100599).